The chain runs to 584 residues: Arginine--tRNA ligase (584 aa).

The 'HIGH' region signature appears at 126–136 (PNIAKEMHVGH).

It belongs to the class-I aminoacyl-tRNA synthetase family. As to quaternary structure, monomer.

The protein localises to the cytoplasm. The catalysed reaction is tRNA(Arg) + L-arginine + ATP = L-arginyl-tRNA(Arg) + AMP + diphosphate. This chain is Arginine--tRNA ligase, found in Synechococcus sp. (strain ATCC 27144 / PCC 6301 / SAUG 1402/1) (Anacystis nidulans).